The following is a 98-amino-acid chain: NADH-ubiquinone oxidoreductase chain 4L (98 aa).

The next 3 membrane-spanning stretches (helical) occupy residues 2-22, 29-49, and 61-81; these read PSIS…MLIF, SLLC…LTIL, and ILLL…LVTV.

This sequence belongs to the complex I subunit 4L family. Core subunit of respiratory chain NADH dehydrogenase (Complex I) which is composed of 45 different subunits.

It is found in the mitochondrion inner membrane. It carries out the reaction a ubiquinone + NADH + 5 H(+)(in) = a ubiquinol + NAD(+) + 4 H(+)(out). In terms of biological role, core subunit of the mitochondrial membrane respiratory chain NADH dehydrogenase (Complex I) which catalyzes electron transfer from NADH through the respiratory chain, using ubiquinone as an electron acceptor. Part of the enzyme membrane arm which is embedded in the lipid bilayer and involved in proton translocation. In Eulemur rubriventer (Red-bellied lemur), this protein is NADH-ubiquinone oxidoreductase chain 4L (MT-ND4L).